Here is a 26-residue protein sequence, read N- to C-terminus: Fumarylacetoacetate hydrolase domain-containing protein 2A (26 aa).

This sequence belongs to the FAH family. Ca(2+) is required as a cofactor. It depends on Mg(2+) as a cofactor.

Functionally, may have hydrolase activity. This chain is Fumarylacetoacetate hydrolase domain-containing protein 2A, found in Mesocricetus auratus (Golden hamster).